A 255-amino-acid polypeptide reads, in one-letter code: Type III pantothenate kinase (255 aa).

6-13 (DVGNSYTM) lines the ATP pocket. 107-110 (GADR) provides a ligand contact to substrate. Aspartate 109 (proton acceptor) is an active-site residue. Aspartate 129 provides a ligand contact to K(+). Threonine 132 contacts ATP. Threonine 183 is a binding site for substrate.

It belongs to the type III pantothenate kinase family. As to quaternary structure, homodimer. It depends on NH4(+) as a cofactor. The cofactor is K(+).

The protein resides in the cytoplasm. It catalyses the reaction (R)-pantothenate + ATP = (R)-4'-phosphopantothenate + ADP + H(+). It participates in cofactor biosynthesis; coenzyme A biosynthesis; CoA from (R)-pantothenate: step 1/5. Functionally, catalyzes the phosphorylation of pantothenate (Pan), the first step in CoA biosynthesis. The polypeptide is Type III pantothenate kinase (Petrotoga mobilis (strain DSM 10674 / SJ95)).